Reading from the N-terminus, the 402-residue chain is MAKRSLSSLSAEELCGKRVFVRVDFNVPVNAEGDITDDTRIRAALPTIKDLIDKGARVILSAHFGRPKGQVNDAMRLTPVAQRLSELLGHTVIKTDSCIGSDAQAKAQSLNNGDVMLLENVRFIQGEEKNDPDFAKELSELAEVYVNDAFGAAHRAHASTEGVTKFLSPNVAGYLMEKELQYLQGAIDSPKRPLAAIVGGSKVSSKIGVLESLIDKCDKVLIGGGMIFTFYKARGLSVGKSLVEDDKLELAKALEEKAKSKGVELLLPTDVVLADNFSPDANSQIAQINSIPEGWMGLDIGPDSVKLFQDALEDCQTVIWNGPMGVFEFDKFANGTNSIATTLSVLSQKGCCTIIGGGDSVAAVEKAGLADKMSHISTGGGASLELLEGKTLPGVAALDELD.

Substrate is bound by residues 24–26 (DFN), Arg40, 63–66 (HFGR), Arg122, and Arg155. ATP-binding positions include Lys206, Gly297, Glu328, and 357-360 (GGDS).

It belongs to the phosphoglycerate kinase family. In terms of assembly, monomer.

It is found in the cytoplasm. It carries out the reaction (2R)-3-phosphoglycerate + ATP = (2R)-3-phospho-glyceroyl phosphate + ADP. Its pathway is carbohydrate degradation; glycolysis; pyruvate from D-glyceraldehyde 3-phosphate: step 2/5. This Prochlorococcus marinus (strain MIT 9211) protein is Phosphoglycerate kinase.